The primary structure comprises 250 residues: Tripartite motif-containing protein 73 (250 aa).

Residues 16–57 (CPICLEVFKESLMLQCGHSYCKGCLVSLSYHLDTKVRCPMCW) form an RING-type zinc finger. A B box-type zinc finger spans residues 84–125 (PEPKVCVHHRNPLSLFCEKDQELICGLCGLLGSHQHHPVTPV). Cysteine 89, histidine 92, cysteine 111, and histidine 117 together coordinate Zn(2+). Coiled coils occupy residues 125–169 (VSTV…NESD) and 204–235 (LVASLDMQLEQAQGTRERLAQAECVLEQFGNE).

This sequence belongs to the TRIM/RBCC family.

This is Tripartite motif-containing protein 73 (TRIM73) from Homo sapiens (Human).